Here is a 199-residue protein sequence, read N- to C-terminus: MTTPRLILASASPARRRLLATVGLTVEVQPSHFDESLVQLNDPPALVQELAFRKAASVARSQTEPALVLGCDSVLAINGEICGKPASPAEAIARWQQMRGQWGELHTGHALIDSASQRRWLACGTTRVRFAEVEDAEIKAYVATGEPLACAGAFALEGKGGLFIAEIQGCHTNVIGLSLPLLRELLLAADYPLLQAWQT.

Residue Asp-72 is the Proton acceptor of the active site.

Belongs to the Maf family. Requires a divalent metal cation as cofactor.

The protein localises to the cytoplasm. The catalysed reaction is a ribonucleoside 5'-triphosphate + H2O = a ribonucleoside 5'-phosphate + diphosphate + H(+). It carries out the reaction a 2'-deoxyribonucleoside 5'-triphosphate + H2O = a 2'-deoxyribonucleoside 5'-phosphate + diphosphate + H(+). Functionally, nucleoside triphosphate pyrophosphatase. May have a dual role in cell division arrest and in preventing the incorporation of modified nucleotides into cellular nucleic acids. This is Nucleoside triphosphate pyrophosphatase from Synechococcus elongatus (strain ATCC 33912 / PCC 7942 / FACHB-805) (Anacystis nidulans R2).